A 357-amino-acid chain; its full sequence is D-alanine--D-alanine ligase (357 aa).

The 195-residue stretch at 145–339 (KEVMLYHGIQ…YGDLVMDIVN (195 aa)) folds into the ATP-grasp domain. 172 to 225 (PFDFPVVVKPTSGGSSVGTHIIHNQEELESGLEDVFRFDNSAIVEEFTPGREFS) is an ATP binding site. 3 residues coordinate Mg(2+): Asp294, Glu306, and Asn308.

This sequence belongs to the D-alanine--D-alanine ligase family. Mg(2+) serves as cofactor. The cofactor is Mn(2+).

It localises to the cytoplasm. The enzyme catalyses 2 D-alanine + ATP = D-alanyl-D-alanine + ADP + phosphate + H(+). The protein operates within cell wall biogenesis; peptidoglycan biosynthesis. Cell wall formation. This is D-alanine--D-alanine ligase from Lacticaseibacillus paracasei (strain ATCC 334 / BCRC 17002 / CCUG 31169 / CIP 107868 / KCTC 3260 / NRRL B-441) (Lactobacillus paracasei).